Here is a 111-residue protein sequence, read N- to C-terminus: MALLKITLLFAVTAITEIVGCYLPWLVIKQGKSLWLLVPAALSLAIFAWLLTLHPTAAGRTYAAYGGMYVVVALIWLHFVEGVGLTRFDFLGATMALAGMAIIALQPISHS.

4 helical membrane-spanning segments follow: residues 8 to 28 (LLFAVTAITEIVGCYLPWLVI), 33 to 53 (SLWLLVPAALSLAIFAWLLTL), 65 to 85 (YGGMYVVVALIWLHFVEGVGL), and 88 to 108 (FDFLGATMALAGMAIIALQPI).

This sequence belongs to the UPF0060 family.

The protein localises to the cell inner membrane. The chain is UPF0060 membrane protein HCH_03337 from Hahella chejuensis (strain KCTC 2396).